The primary structure comprises 355 residues: Cytoplasmic tRNA 2-thiolation protein 1 (355 aa).

Residues 320–341 are disordered; sequence GIGRPRGVNGDHNKETKKPGSV. Residues 328–337 show a composition bias toward basic and acidic residues; that stretch reads NGDHNKETKK.

Belongs to the TtcA family. CTU1/NCS6/ATPBD3 subfamily.

Its subcellular location is the cytoplasm. Its pathway is tRNA modification; 5-methoxycarbonylmethyl-2-thiouridine-tRNA biosynthesis. In terms of biological role, plays a central role in 2-thiolation of mcm(5)S(2)U at tRNA wobble positions of tRNA(Lys), tRNA(Glu) and tRNA(Gln). Directly binds tRNAs and probably acts by catalyzing adenylation of tRNAs, an intermediate required for 2-thiolation. It is unclear whether it acts as a sulfurtransferase that transfers sulfur from thiocarboxylated URM1 onto the uridine of tRNAs at wobble position. The polypeptide is Cytoplasmic tRNA 2-thiolation protein 1 (Arabidopsis thaliana (Mouse-ear cress)).